Here is a 374-residue protein sequence, read N- to C-terminus: Probable phosphoserine aminotransferase (374 aa).

Arg48 contributes to the L-glutamate binding site. Pyridoxal 5'-phosphate is bound by residues 82–83, Trp110, Thr160, Asp183, and Gln206; that span reads AS. Position 207 is an N6-(pyridoxal phosphate)lysine (Lys207). Pyridoxal 5'-phosphate is bound at residue 248–249; that stretch reads NT.

This sequence belongs to the class-V pyridoxal-phosphate-dependent aminotransferase family. SerC subfamily. In terms of assembly, homodimer. Pyridoxal 5'-phosphate serves as cofactor.

The catalysed reaction is O-phospho-L-serine + 2-oxoglutarate = 3-phosphooxypyruvate + L-glutamate. It catalyses the reaction 4-(phosphooxy)-L-threonine + 2-oxoglutarate = (R)-3-hydroxy-2-oxo-4-phosphooxybutanoate + L-glutamate. Its pathway is amino-acid biosynthesis; L-serine biosynthesis; L-serine from 3-phospho-D-glycerate: step 2/3. It functions in the pathway cofactor biosynthesis; pyridoxine 5'-phosphate biosynthesis; pyridoxine 5'-phosphate from D-erythrose 4-phosphate: step 3/5. Catalyzes the reversible conversion of 3-phosphohydroxypyruvate to phosphoserine and of 3-hydroxy-2-oxo-4-phosphonooxybutanoate to phosphohydroxythreonine. This Dictyostelium discoideum (Social amoeba) protein is Probable phosphoserine aminotransferase (serC).